The sequence spans 178 residues: Protein GrpE (178 aa).

Residues Met-1 to Glu-11 show a composition bias toward basic and acidic residues. Positions Met-1–Asp-32 are disordered.

Belongs to the GrpE family. Homodimer.

The protein localises to the cytoplasm. In terms of biological role, participates actively in the response to hyperosmotic and heat shock by preventing the aggregation of stress-denatured proteins, in association with DnaK and GrpE. It is the nucleotide exchange factor for DnaK and may function as a thermosensor. Unfolded proteins bind initially to DnaJ; upon interaction with the DnaJ-bound protein, DnaK hydrolyzes its bound ATP, resulting in the formation of a stable complex. GrpE releases ADP from DnaK; ATP binding to DnaK triggers the release of the substrate protein, thus completing the reaction cycle. Several rounds of ATP-dependent interactions between DnaJ, DnaK and GrpE are required for fully efficient folding. In Methanothrix thermoacetophila (strain DSM 6194 / JCM 14653 / NBRC 101360 / PT) (Methanosaeta thermophila), this protein is Protein GrpE.